We begin with the raw amino-acid sequence, 204 residues long: Large ribosomal subunit protein uL4 (204 aa).

The interval 52–76 (AEVRGGGKKPWAQKGGGRARAGSRR) is disordered.

The protein belongs to the universal ribosomal protein uL4 family. Part of the 50S ribosomal subunit.

One of the primary rRNA binding proteins, this protein initially binds near the 5'-end of the 23S rRNA. It is important during the early stages of 50S assembly. It makes multiple contacts with different domains of the 23S rRNA in the assembled 50S subunit and ribosome. Its function is as follows. Forms part of the polypeptide exit tunnel. The sequence is that of Large ribosomal subunit protein uL4 from Sulfurimonas denitrificans (strain ATCC 33889 / DSM 1251) (Thiomicrospira denitrificans (strain ATCC 33889 / DSM 1251)).